Reading from the N-terminus, the 224-residue chain is Peptide deformylase 3 (224 aa).

Fe cation contacts are provided by cysteine 135 and histidine 177. Glutamate 178 is a catalytic residue. Residue histidine 181 participates in Fe cation binding.

It belongs to the polypeptide deformylase family. The cofactor is Fe(2+).

It carries out the reaction N-terminal N-formyl-L-methionyl-[peptide] + H2O = N-terminal L-methionyl-[peptide] + formate. Its function is as follows. Removes the formyl group from the N-terminal Met of newly synthesized proteins. Requires at least a dipeptide for an efficient rate of reaction. N-terminal L-methionine is a prerequisite for activity but the enzyme has broad specificity at other positions. The sequence is that of Peptide deformylase 3 from Streptomyces avermitilis (strain ATCC 31267 / DSM 46492 / JCM 5070 / NBRC 14893 / NCIMB 12804 / NRRL 8165 / MA-4680).